Here is a 540-residue protein sequence, read N- to C-terminus: Ribonuclease Y (540 aa).

The helical transmembrane segment at 4–24 (TILVPVAVAIVSVLVGGCAGY) threads the bilayer. Positions 230–293 (TVSVVNLPND…EIAKRALERL (64 aa)) constitute a KH domain. The 94-residue stretch at 356–449 (VLSHSIEVGK…VVAADTISSA (94 aa)) folds into the HD domain.

Belongs to the RNase Y family.

Its subcellular location is the cell membrane. In terms of biological role, endoribonuclease that initiates mRNA decay. The sequence is that of Ribonuclease Y from Lactobacillus gasseri (strain ATCC 33323 / DSM 20243 / BCRC 14619 / CIP 102991 / JCM 1131 / KCTC 3163 / NCIMB 11718 / NCTC 13722 / AM63).